Consider the following 339-residue polypeptide: MSVLERIIRGSDLDREEARDLMCRIVGGELSDVEVAGILVALRCKGYTSEELVGFVDGMMEHAVKVDPDVERLVDTAGTGGDELDTFNASTLAGLTAAAAGVPVAKHGNRSVTSECGSADILEALGVNIEADPDTVKRCIEEVGFGFMFAPKFHPAMKNVMPVRRKLGIRTVFNVLGPLTNPARERVTGQVIGVYSENLLDLVAGALAELGVRRGLVVYGLDGVDELSVTCENEVVYVDDGEVTDRDTVAPEDVGLDRADPKDVAGADPETSAEEARKILGGELPVDHPKVQMTAFNAGAALYVGEAVDSLEKGIQRALDVLEEGRALEVLEKVVDLSS.

5-phospho-alpha-D-ribose 1-diphosphate is bound by residues Gly-78, 81-82 (GD), Thr-86, 88-91 (NAST), 106-114 (KHGNRSVTS), and Ser-118. Anthranilate is bound at residue Gly-78. Mg(2+) is bound at residue Ser-90. An anthranilate-binding site is contributed by Asn-109. Anthranilate is bound at residue Arg-164. Residues Asp-225 and Glu-226 each contribute to the Mg(2+) site. Positions 248-265 (TVAPEDVGLDRADPKDVA) are enriched in basic and acidic residues. The interval 248–271 (TVAPEDVGLDRADPKDVAGADPET) is disordered.

It belongs to the anthranilate phosphoribosyltransferase family. Homodimer. Mg(2+) serves as cofactor.

The catalysed reaction is N-(5-phospho-beta-D-ribosyl)anthranilate + diphosphate = 5-phospho-alpha-D-ribose 1-diphosphate + anthranilate. The protein operates within amino-acid biosynthesis; L-tryptophan biosynthesis; L-tryptophan from chorismate: step 2/5. In terms of biological role, catalyzes the transfer of the phosphoribosyl group of 5-phosphorylribose-1-pyrophosphate (PRPP) to anthranilate to yield N-(5'-phosphoribosyl)-anthranilate (PRA). This Methanopyrus kandleri (strain AV19 / DSM 6324 / JCM 9639 / NBRC 100938) protein is Anthranilate phosphoribosyltransferase.